The sequence spans 293 residues: Homoserine kinase (293 aa).

83–93 provides a ligand contact to ATP; that stretch reads RPKSGLGSSGA.

It belongs to the GHMP kinase family. Homoserine kinase subfamily.

The protein localises to the cytoplasm. It carries out the reaction L-homoserine + ATP = O-phospho-L-homoserine + ADP + H(+). It participates in amino-acid biosynthesis; L-threonine biosynthesis; L-threonine from L-aspartate: step 4/5. In terms of biological role, catalyzes the ATP-dependent phosphorylation of L-homoserine to L-homoserine phosphate. The polypeptide is Homoserine kinase (Pyrococcus horikoshii (strain ATCC 700860 / DSM 12428 / JCM 9974 / NBRC 100139 / OT-3)).